The following is a 509-amino-acid chain: MNEQQRLASQQANASTKKEEKDYSKYFEHVYQPPSLKDAKKRGKEQVKIERDFGLPEEFRNFGKGRKFYIRTYGCQMNEHDTEVMAGIFTTLGYEPTFTTEDADVILLNTCAIRENAENKVFGELGHLKPLKQKNPDLLIGVCGCMSQEESVVNKIMQKHQHVDMVFGTHNIHRLPYILKDAMFSKATVVEVWSKEGDVIENLPKVRRGDIKAWVNIMYGCDKFCTYCIVPYTRGKERSRRPEDIIKEVRHLAANGYKEITLLGQNVNAYGKDFDDLEYGLGDLMDELRKIDIARIRFTTSHPRDFDDHLIEVLGKGGNLVEHIHLPVQSGSTDMLKIMARKYTREQYLELVRKIKKTIPNVVLTTDIIVGFPNETDEQFEETLSLYREVEFDSAFTFIYSPREGTPAAKMKDNIPMEVKKERLQRLNELVNEFSAKKNKKYEGQIVEVLVDGESKNNPDVLAGYTRTNKLVNFVAPKSVIGQLVKVKITEAKTWSLNGELVEEPIEVK.

Residues 1–15 (MNEQQRLASQQANAS) show a composition bias toward polar residues. A disordered region spans residues 1–22 (MNEQQRLASQQANASTKKEEKD). One can recognise an MTTase N-terminal domain in the interval 66–184 (RKFYIRTYGC…LPYILKDAMF (119 aa)). Residues Cys75, Cys111, Cys145, Cys221, Cys225, and Cys228 each coordinate [4Fe-4S] cluster. The Radical SAM core domain occupies 207-437 (RRGDIKAWVN…NELVNEFSAK (231 aa)). Positions 440-503 (KKYEGQIVEV…TWSLNGELVE (64 aa)) constitute a TRAM domain.

It belongs to the methylthiotransferase family. MiaB subfamily. As to quaternary structure, monomer. The cofactor is [4Fe-4S] cluster.

The protein resides in the cytoplasm. It catalyses the reaction N(6)-dimethylallyladenosine(37) in tRNA + (sulfur carrier)-SH + AH2 + 2 S-adenosyl-L-methionine = 2-methylsulfanyl-N(6)-dimethylallyladenosine(37) in tRNA + (sulfur carrier)-H + 5'-deoxyadenosine + L-methionine + A + S-adenosyl-L-homocysteine + 2 H(+). Catalyzes the methylthiolation of N6-(dimethylallyl)adenosine (i(6)A), leading to the formation of 2-methylthio-N6-(dimethylallyl)adenosine (ms(2)i(6)A) at position 37 in tRNAs that read codons beginning with uridine. This chain is tRNA-2-methylthio-N(6)-dimethylallyladenosine synthase, found in Bacillus cytotoxicus (strain DSM 22905 / CIP 110041 / 391-98 / NVH 391-98).